A 487-amino-acid chain; its full sequence is 3-octaprenyl-4-hydroxybenzoate carboxy-lyase (487 aa).

Asn172 contacts Mn(2+). Residues 175–177, 189–191, and 194–195 each bind prenylated FMN; these read IYR, RWL, and RG. Glu238 lines the Mn(2+) pocket. Catalysis depends on Asp287, which acts as the Proton donor.

Belongs to the UbiD family. Homohexamer. Prenylated FMN is required as a cofactor. Mn(2+) serves as cofactor.

It localises to the cell membrane. The enzyme catalyses a 4-hydroxy-3-(all-trans-polyprenyl)benzoate + H(+) = a 2-(all-trans-polyprenyl)phenol + CO2. It participates in cofactor biosynthesis; ubiquinone biosynthesis. Functionally, catalyzes the decarboxylation of 3-octaprenyl-4-hydroxy benzoate to 2-octaprenylphenol, an intermediate step in ubiquinone biosynthesis. This Thiobacillus denitrificans (strain ATCC 25259 / T1) protein is 3-octaprenyl-4-hydroxybenzoate carboxy-lyase.